Reading from the N-terminus, the 434-residue chain is MPDEDLQDILSQISRDNIESTIRKLVSFGTRHTLSSQTDPVRGVGAARTWLTAKFQEAADESEGKMTVDWNSFIKYPGDNERIIFPVNITTIVATLKGSEDPDRYYLTGGHYDSRNSNPIDYQGDAPGAVDDASGVAVSLELARIFAHYKPKSTIVFTAFAGEEQGLLGAQNLAQTYKNASVNLAAMINLDMVGNSKAEDGTTDPHNIRLFCQGTPLTENATTMTSRLSIGGDNDSPARNLGRFIYEVASNVWTEMTVRVIYRLDRYSRGGDHRPFLEAGYTGVRFVQPNEDYTQQHQNVTVRNGKQYGDLTQWLDFEYNTRAAKVVATTMWSLANAPASPTNVGINTTMSDNFSQFKWDAPKGLPVEGYEILYRETIEPHWTNVIDVGNVTWYNLTSATIHKDNVIFGVRSVGKGGYKSPAVLPFPFGCARNC.

N-linked (GlcNAc...) asparagine glycosylation occurs at Asn88. Residues His111, Asp131, and Glu164 each contribute to the Zn(2+) site. Residue Asn179 is glycosylated (N-linked (GlcNAc...) asparagine). Asp191 serves as a coordination point for Zn(2+). N-linked (GlcNAc...) asparagine glycans are attached at residues Asn220, Asn299, Asn347, Asn353, Asn390, and Asn395. One can recognise a Fibronectin type-III domain in the interval 340-433; the sequence is SPTNVGINTT…LPFPFGCARN (94 aa).

The protein belongs to the peptidase M28 family. M28B subfamily. Zn(2+) is required as a cofactor.

The protein localises to the secreted. The chain is Probable zinc metalloprotease PTRG_04772 from Pyrenophora tritici-repentis (strain Pt-1C-BFP) (Wheat tan spot fungus).